The following is a 354-amino-acid chain: Methylthioribose-1-phosphate isomerase (354 aa).

Residues 58–60 (RGA), R101, and Q204 each bind substrate. The Proton donor role is filled by D245. 255–256 (NK) provides a ligand contact to substrate.

Belongs to the eIF-2B alpha/beta/delta subunits family. MtnA subfamily.

It catalyses the reaction 5-(methylsulfanyl)-alpha-D-ribose 1-phosphate = 5-(methylsulfanyl)-D-ribulose 1-phosphate. The protein operates within amino-acid biosynthesis; L-methionine biosynthesis via salvage pathway; L-methionine from S-methyl-5-thio-alpha-D-ribose 1-phosphate: step 1/6. Functionally, catalyzes the interconversion of methylthioribose-1-phosphate (MTR-1-P) into methylthioribulose-1-phosphate (MTRu-1-P). In Xanthomonas oryzae pv. oryzae (strain MAFF 311018), this protein is Methylthioribose-1-phosphate isomerase.